A 46-amino-acid chain; its full sequence is Major urinary protein (46 aa).

N-linked (GlcNAc...) asparagine glycosylation is present at Asn-15.

Belongs to the calycin superfamily. Lipocalin family. In terms of tissue distribution, found in many tissues including liver, urine, preputial gland, clitoral gland, submandibular gland and salivary gland.

Its subcellular location is the secreted. Its function is as follows. Binds pheromones that are released from drying urine of males. These pheromones affect the sexual behavior of females. Acts as a shuttle for pheromonal communication between individuals of the same species. In Rattus rattus (Black rat), this protein is Major urinary protein.